The chain runs to 438 residues: Zinc finger protein 641 (438 aa).

The interval 1–53 (MQAEDRSQFGSAAEMLSEQTAALGTGWESMNVQLDGAEPQVERGSQEERPWRT) is disordered. Over residues 17–32 (SEQTAALGTGWESMNV) the composition is skewed to polar residues. The segment covering 40–51 (QVERGSQEERPW) has biased composition (basic and acidic residues). One can recognise a KRAB domain in the interval 109–181 (VTIKDVSLCF…DPQDLEERDI (73 aa)). Residues 171–265 (PDPQDLEERD…EMDSLLRPHT (95 aa)) are transactivation. The residue at position 191 (S191) is a Phosphoserine. C2H2-type zinc fingers lie at residues 264–286 (HTCP…QQTH), 292–314 (YSCL…QKTH), and 320–342 (SRCS…QRVH). The interval 345 to 367 (GKSCKGQEVGESPGTRKRQRAPP) is disordered. 2 C2H2-type zinc fingers span residues 372-394 (HVCT…WLTH) and 400-422 (FQCP…LLTH). The interval 418 to 438 (HLLTHQGQSPRNSWDRGTSVF) is disordered. A compositionally biased stretch (polar residues) spans 422–438 (HQGQSPRNSWDRGTSVF). Phosphoserine is present on S426.

It belongs to the krueppel C2H2-type zinc-finger protein family. As to expression, highly expressed in skeletal muscle, moderate expression in heart, liver, and pancreas, lower expression in placenta, no expression seen in brain, lung, and kidney.

Its subcellular location is the nucleus. Its function is as follows. Transcriptional activator. Activates transcriptional activities of SRE and AP-1. This chain is Zinc finger protein 641 (ZNF641), found in Homo sapiens (Human).